The chain runs to 102 residues: Mini zinc finger protein 1 (102 aa).

Residues 1–13 (MMKKRQMVIKQRS) show a composition bias toward basic residues. Residues 1 to 34 (MMKKRQMVIKQRSRNSNTSSSWTTTSSSSSSSEI) are disordered. A compositionally biased stretch (low complexity) spans 14–32 (RNSNTSSSWTTTSSSSSSS). The ZF-HD dimerization-type; degenerate zinc-finger motif lies at 39-88 (YVECQKNHAANIGGYAVDGCREFMAAGVEGTVDALRCAACGCHRNFHRKE).

As to quaternary structure, homo- and heterodimers. Interacts with ZHD1, ZHD5, ZHD6, ZHD7, ZHD8, ZHD10 and ZHD13. In terms of tissue distribution, mostly expressed in roots and stems, present in siliques and seedlings, and weakly observed in petioles, leaves and flowers.

The protein resides in the cytoplasm. Functionally, inhibits zinc finger homeodomain (ZHD) transcription factors, such as ZHD5, by interacting with them to prevent both their nuclear localization and their DNA-binding properties. Involved in integrating signals from multiple hormones by preventing the expression of genes involved in gibberellic acid (GA), auxin and brassinosteroid signaling and by promoting the expression of abscisic acid (ABA)-responsive genes. Regulates several development aspects, including photomorphogenesis, apical dominance, longevity, flower morphology and fertility, as well as root and stem elongation. Promotes the formation of ectopic shoot meristems on leaf margins. The sequence is that of Mini zinc finger protein 1 (MIF1) from Arabidopsis thaliana (Mouse-ear cress).